Consider the following 453-residue polypeptide: MGDTRVTVIGGGLAGTEAAWQLARAGVAVELVEMKPERRSPAHVLPGLAELVCSNSLRSDNPLNAVGLLHEELRRLGSLVLGCADETRVPAGDALAVDRERFSEAVTARLTGHAGVRIVHRELEELPPPPALAVIATGPLTADALAARLAETTGGRLHFYDAIAPIVAAESIDRSIAYARSRYGKGSGDDYLNLPLDEAQYHAFVEALLQGEKVAAHGFEEPRYFEGCLPIEVMAERGLEVLAHGPLKPVGLEDPRTGRRPHAVVQLRREDVDGTAWNLVGFQTRLTWPEQRRIFRAFLPGLANAEFVRLGQIHRNTFVDAPRVLAPDLSVRAAPHLFLAGQITGVEGYVESAACGLMAARAVLDRLAGRAFRPPPPATALGALHRHLTGEAHPPGYDYQPSNVVFALFPPLTGRHRGKAGRKEAHVERARKELAPWIDSAPPTAVPAAPAAG.

Residue 10 to 15 (GGGLAG) coordinates FAD. Positions 433-453 (ELAPWIDSAPPTAVPAAPAAG) are disordered. A compositionally biased stretch (low complexity) spans 441-453 (APPTAVPAAPAAG).

This sequence belongs to the MnmG family. TrmFO subfamily. FAD is required as a cofactor.

It is found in the cytoplasm. The catalysed reaction is uridine(54) in tRNA + (6R)-5,10-methylene-5,6,7,8-tetrahydrofolate + NADH + H(+) = 5-methyluridine(54) in tRNA + (6S)-5,6,7,8-tetrahydrofolate + NAD(+). It carries out the reaction uridine(54) in tRNA + (6R)-5,10-methylene-5,6,7,8-tetrahydrofolate + NADPH + H(+) = 5-methyluridine(54) in tRNA + (6S)-5,6,7,8-tetrahydrofolate + NADP(+). In terms of biological role, catalyzes the folate-dependent formation of 5-methyl-uridine at position 54 (M-5-U54) in all tRNAs. In Anaeromyxobacter dehalogenans (strain 2CP-1 / ATCC BAA-258), this protein is Methylenetetrahydrofolate--tRNA-(uracil-5-)-methyltransferase TrmFO.